Here is a 1024-residue protein sequence, read N- to C-terminus: Gamma-tubulin complex component 5 (1024 aa).

2 disordered regions span residues 155 to 203 and 521 to 545; these read IGPY…LDPC and TENE…SSRQ. Residues 189-203 are compositionally biased toward basic and acidic residues; that stretch reads TPLEEQDQNRKLDPC. Low complexity predominate over residues 531 to 543; it reads ASASSGSDQGPSS.

The protein belongs to the TUBGCP family. Component of the gamma-tubulin ring complex (gTuRC) consisting of TUBGCP2, TUBGCP3, TUBGCP4, TUBGCP5 and TUBGCP6 and gamma-tubulin TUBG1 or TUBG2. TUBGCP2, TUBGCP3, TUBGCP4, TUBGCP5 and TUBGCP6 assemble in a 5:5:2:1:1 stoichiometry; each is associated with a gamma-tubulin, thereby arranging 14 gamma-tubulins in a helical manner. Gamma-tubulin at the first position is blocked by TUBGCP3 at the last position, allowing 13 protafilaments to grow into a microtubule. The gTuRC (via TUBGCP3 and TUBGCP6) interacts with ACTB and MZT1; the interactions form a luminal bridge that stabilizes the initial structure during complex assembly. The gTuRC (via TUBGCP2) interacts with MZT2A/MZT2B and CDK5RAP2 (via CM1 motif); the interactions play a role in gTuRC activation. In terms of tissue distribution, widely expressed, with highest levels in heart and skeletal muscle and moderate levels in brain.

The protein localises to the cytoplasm. The protein resides in the cytoskeleton. It localises to the microtubule organizing center. Its subcellular location is the centrosome. In terms of biological role, component of the gamma-tubulin ring complex (gTuRC) which mediates microtubule nucleation. The gTuRC regulates the minus-end nucleation of alpha-beta tubulin heterodimers that grow into microtubule protafilaments, a critical step in centrosome duplication and spindle formation. In Homo sapiens (Human), this protein is Gamma-tubulin complex component 5 (TUBGCP5).